Reading from the N-terminus, the 340-residue chain is Probable HTH-type transcriptional regulator EndR (340 aa).

An HTH lacI-type domain is found at 1–58; it reads MVTTMKEVAERAGVSKSTVSQFLQKRYNYMSENTKKKIEQAIEDLSYIPNEVARSLKQ. Positions 5–24 form a DNA-binding region, H-T-H motif; that stretch reads MKEVAERAGVSKSTVSQFLQ.

In terms of biological role, putative repressor of the endoglucanase operon. The polypeptide is Probable HTH-type transcriptional regulator EndR (endR) (Paenibacillus polymyxa (Bacillus polymyxa)).